The following is a 473-amino-acid chain: Aspartyl/glutamyl-tRNA(Asn/Gln) amidotransferase subunit B (473 aa).

Belongs to the GatB/GatE family. GatB subfamily. In terms of assembly, heterotrimer of A, B and C subunits.

The catalysed reaction is L-glutamyl-tRNA(Gln) + L-glutamine + ATP + H2O = L-glutaminyl-tRNA(Gln) + L-glutamate + ADP + phosphate + H(+). It carries out the reaction L-aspartyl-tRNA(Asn) + L-glutamine + ATP + H2O = L-asparaginyl-tRNA(Asn) + L-glutamate + ADP + phosphate + 2 H(+). In terms of biological role, allows the formation of correctly charged Asn-tRNA(Asn) or Gln-tRNA(Gln) through the transamidation of misacylated Asp-tRNA(Asn) or Glu-tRNA(Gln) in organisms which lack either or both of asparaginyl-tRNA or glutaminyl-tRNA synthetases. The reaction takes place in the presence of glutamine and ATP through an activated phospho-Asp-tRNA(Asn) or phospho-Glu-tRNA(Gln). The protein is Aspartyl/glutamyl-tRNA(Asn/Gln) amidotransferase subunit B of Levilactobacillus brevis (strain ATCC 367 / BCRC 12310 / CIP 105137 / JCM 1170 / LMG 11437 / NCIMB 947 / NCTC 947) (Lactobacillus brevis).